The following is a 1066-amino-acid chain: Isoleucine--tRNA ligase (1066 aa).

A 'HIGH' region motif is present at residues 49–59 (PYVSGAIHLGT). The short motif at 625 to 629 (KMSKS) is the 'KMSKS' region element. K628 is an ATP binding site.

This sequence belongs to the class-I aminoacyl-tRNA synthetase family. IleS type 2 subfamily. Monomer. The cofactor is Zn(2+).

Its subcellular location is the cytoplasm. The enzyme catalyses tRNA(Ile) + L-isoleucine + ATP = L-isoleucyl-tRNA(Ile) + AMP + diphosphate. Functionally, catalyzes the attachment of isoleucine to tRNA(Ile). As IleRS can inadvertently accommodate and process structurally similar amino acids such as valine, to avoid such errors it has two additional distinct tRNA(Ile)-dependent editing activities. One activity is designated as 'pretransfer' editing and involves the hydrolysis of activated Val-AMP. The other activity is designated 'posttransfer' editing and involves deacylation of mischarged Val-tRNA(Ile). This chain is Isoleucine--tRNA ligase, found in Pyrococcus horikoshii (strain ATCC 700860 / DSM 12428 / JCM 9974 / NBRC 100139 / OT-3).